Reading from the N-terminus, the 40-residue chain is MTPSLANFLWSLVWGTVIVVIPVTVGLVFISQSDKIKRNF.

The helical transmembrane segment at 10-30 (WSLVWGTVIVVIPVTVGLVFI) threads the bilayer.

It belongs to the PsbX family. Type 1 subfamily. As to quaternary structure, PSII is composed of 1 copy each of membrane proteins PsbA, PsbB, PsbC, PsbD, PsbE, PsbF, PsbH, PsbI, PsbJ, PsbK, PsbL, PsbM, PsbT, PsbX, PsbY, PsbZ, Psb30/Ycf12, peripheral proteins PsbO, CyanoQ (PsbQ), PsbU, PsbV and a large number of cofactors. It forms dimeric complexes.

The protein resides in the cellular thylakoid membrane. Involved in the binding and/or turnover of quinones at the Q(B) site of photosystem II (PSII). PSII is a light-driven water plastoquinone oxidoreductase, using light energy to abstract electrons from H(2)O, generating a proton gradient subsequently used for ATP formation. The chain is Photosystem II reaction center protein X from Crocosphaera subtropica (strain ATCC 51142 / BH68) (Cyanothece sp. (strain ATCC 51142)).